Reading from the N-terminus, the 188-residue chain is FMN-dependent NADPH-azoreductase (188 aa).

Belongs to the azoreductase type 2 family. Homotetramer. Requires FMN as cofactor.

Catalyzes the reductive cleavage of azo bond in aromatic azo compounds to the corresponding amines. Requires NADPH, but not NADH, as an electron donor for its activity. The sequence is that of FMN-dependent NADPH-azoreductase (azo1) from Staphylococcus saprophyticus subsp. saprophyticus (strain ATCC 15305 / DSM 20229 / NCIMB 8711 / NCTC 7292 / S-41).